Consider the following 458-residue polypeptide: tRNA modification GTPase MnmE (458 aa).

(6S)-5-formyl-5,6,7,8-tetrahydrofolate-binding residues include Arg22, Glu84, and Arg123. The TrmE-type G domain occupies 220-379 (GIATAIIGRP…LEKAIADLFF (160 aa)). Residue Asn230 coordinates K(+). GTP contacts are provided by residues 230–235 (NVGKSS), 249–255 (TDIAGTT), and 274–277 (DTAG). Ser234 provides a ligand contact to Mg(2+). Positions 249, 251, and 254 each coordinate K(+). Thr255 is a Mg(2+) binding site. Lys458 is a binding site for (6S)-5-formyl-5,6,7,8-tetrahydrofolate.

It belongs to the TRAFAC class TrmE-Era-EngA-EngB-Septin-like GTPase superfamily. TrmE GTPase family. As to quaternary structure, homodimer. Heterotetramer of two MnmE and two MnmG subunits. Requires K(+) as cofactor.

Its subcellular location is the cytoplasm. Functionally, exhibits a very high intrinsic GTPase hydrolysis rate. Involved in the addition of a carboxymethylaminomethyl (cmnm) group at the wobble position (U34) of certain tRNAs, forming tRNA-cmnm(5)s(2)U34. The polypeptide is tRNA modification GTPase MnmE (Bacillus cereus (strain ZK / E33L)).